Consider the following 447-residue polypeptide: Probable glycine dehydrogenase (decarboxylating) subunit 1 (447 aa).

This sequence belongs to the GcvP family. N-terminal subunit subfamily. The glycine cleavage system is composed of four proteins: P, T, L and H. In this organism, the P 'protein' is a heterodimer of two subunits.

The catalysed reaction is N(6)-[(R)-lipoyl]-L-lysyl-[glycine-cleavage complex H protein] + glycine + H(+) = N(6)-[(R)-S(8)-aminomethyldihydrolipoyl]-L-lysyl-[glycine-cleavage complex H protein] + CO2. The glycine cleavage system catalyzes the degradation of glycine. The P protein binds the alpha-amino group of glycine through its pyridoxal phosphate cofactor; CO(2) is released and the remaining methylamine moiety is then transferred to the lipoamide cofactor of the H protein. This Maricaulis maris (strain MCS10) (Caulobacter maris) protein is Probable glycine dehydrogenase (decarboxylating) subunit 1.